Consider the following 208-residue polypeptide: MVDNKDFNEELKENIQEELDNETKAENPNIDEEVEEVSEDIKADEKVIDFEELQALKEENTMFKSKTKKLENELEALKDRLLRISAEYENYRKRTDKEKERIYTDACEDVLIKMLPVLDNLERALAVDGTVEDLKKGVEMTVRQFEDALEKLQVEEISTENGFDPELHQAMMVVEQEGAEPNQVAQVFQKGYKRGDKVIRHSMVTVTK.

The segment covering 1-25 (MVDNKDFNEELKENIQEELDNETKA) has biased composition (basic and acidic residues). The tract at residues 1-38 (MVDNKDFNEELKENIQEELDNETKAENPNIDEEVEEVS) is disordered. A compositionally biased stretch (acidic residues) spans 29–38 (NIDEEVEEVS).

It belongs to the GrpE family. In terms of assembly, homodimer.

The protein localises to the cytoplasm. In terms of biological role, participates actively in the response to hyperosmotic and heat shock by preventing the aggregation of stress-denatured proteins, in association with DnaK and GrpE. It is the nucleotide exchange factor for DnaK and may function as a thermosensor. Unfolded proteins bind initially to DnaJ; upon interaction with the DnaJ-bound protein, DnaK hydrolyzes its bound ATP, resulting in the formation of a stable complex. GrpE releases ADP from DnaK; ATP binding to DnaK triggers the release of the substrate protein, thus completing the reaction cycle. Several rounds of ATP-dependent interactions between DnaJ, DnaK and GrpE are required for fully efficient folding. In Clostridium perfringens (strain 13 / Type A), this protein is Protein GrpE.